The primary structure comprises 402 residues: WAT1-related protein At5g07050 (402 aa).

10 helical membrane-spanning segments follow: residues 20–40, 48–68, 74–94, 109–129, 149–169, 196–216, 229–249, 266–286, 293–313, and 318–338; these read FAMISLQFGYAGMNIITKISL, VLVVYRHAIATAVIAPFAFFF, PKITFSIFMQLFILGLLGPVI, TFSCAMSNMLPAMTFILAVLF, VVTVAGAMLMTIYKGPIVELF, FLKGSILLIFATLAWASLFVL, LSLTTLICFIGTLQAVAVTFV, LAAAYSGIVASSISYYVQGIV, VFATAFSPLMMVIVAVMGSFV, and IFLGGVIGAVLIVIGLYAVLW. 2 EamA domains span residues 29 to 159 and 208 to 337; these read YAGM…MLMT and LAWA…YAVL.

Belongs to the drug/metabolite transporter (DMT) superfamily. Plant drug/metabolite exporter (P-DME) (TC 2.A.7.4) family.

The protein localises to the membrane. The polypeptide is WAT1-related protein At5g07050 (Arabidopsis thaliana (Mouse-ear cress)).